Consider the following 111-residue polypeptide: SPbeta prophage-derived uncharacterized protein YopW (111 aa).

The polypeptide is SPbeta prophage-derived uncharacterized protein YopW (yopW) (Bacillus subtilis (strain 168)).